A 310-amino-acid chain; its full sequence is Oxygen-dependent coproporphyrinogen-III oxidase (310 aa).

S93 is a substrate binding site. Positions 97 and 107 each coordinate a divalent metal cation. The Proton donor role is filled by H107. 109–111 (NVR) lines the substrate pocket. A divalent metal cation-binding residues include H146 and H176. Residues 241 to 276 (YVEFNLVYDRGTLFGLQSGGRTESILMSLPPQVRWS) are important for dimerization. Residue 259 to 261 (GGR) coordinates substrate.

The protein belongs to the aerobic coproporphyrinogen-III oxidase family. As to quaternary structure, homodimer. A divalent metal cation is required as a cofactor.

It is found in the cytoplasm. The enzyme catalyses coproporphyrinogen III + O2 + 2 H(+) = protoporphyrinogen IX + 2 CO2 + 2 H2O. Its pathway is porphyrin-containing compound metabolism; protoporphyrin-IX biosynthesis; protoporphyrinogen-IX from coproporphyrinogen-III (O2 route): step 1/1. Functionally, involved in the heme biosynthesis. Catalyzes the aerobic oxidative decarboxylation of propionate groups of rings A and B of coproporphyrinogen-III to yield the vinyl groups in protoporphyrinogen-IX. The protein is Oxygen-dependent coproporphyrinogen-III oxidase of Pseudomonas fluorescens (strain SBW25).